The chain runs to 309 residues: 2-phospho-L-lactate transferase (309 aa).

Residues D50 and K89 each contribute to the 7,8-didemethyl-8-hydroxy-5-deazariboflavin site.

The protein belongs to the CofD family. As to quaternary structure, homodimer. The cofactor is Mg(2+).

The enzyme catalyses (2S)-lactyl-2-diphospho-5'-guanosine + 7,8-didemethyl-8-hydroxy-5-deazariboflavin = oxidized coenzyme F420-0 + GMP + H(+). It functions in the pathway cofactor biosynthesis; coenzyme F420 biosynthesis. In terms of biological role, catalyzes the transfer of the 2-phospholactate moiety from (2S)-lactyl-2-diphospho-5'-guanosine to 7,8-didemethyl-8-hydroxy-5-deazariboflavin (FO) with the formation of oxidized coenzyme F420-0 and GMP. This Methanococcus maripaludis (strain C5 / ATCC BAA-1333) protein is 2-phospho-L-lactate transferase.